The chain runs to 276 residues: Undecaprenyl-diphosphatase (276 aa).

The next 5 helical transmembrane spans lie at 84–104, 115–135, 188–208, 222–242, and 250–270; these read YRLG…GLLF, LWVV…AEYL, FGFL…LPDA, QLLV…SWFL, and MYWF…LLAT.

This sequence belongs to the UppP family.

Its subcellular location is the cell membrane. It catalyses the reaction di-trans,octa-cis-undecaprenyl diphosphate + H2O = di-trans,octa-cis-undecaprenyl phosphate + phosphate + H(+). Functionally, catalyzes the dephosphorylation of undecaprenyl diphosphate (UPP). Confers resistance to bacitracin. The chain is Undecaprenyl-diphosphatase from Mycobacterium ulcerans (strain Agy99).